The primary structure comprises 93 residues: Protein FMP16, mitochondrial (93 aa).

The N-terminal 25 residues, 1–25, are a transit peptide targeting the mitochondrion; it reads MLRTTFLRTPRQLMRKSPRASFSIV. A disordered region spans residues 30–93; sequence FPHLKNNQDE…EQNRPDDGVY (64 aa). The segment covering 35–93 has biased composition (basic and acidic residues); it reads NNQDEAEKKEQGLFDSNKKRLDTLEHGKNPDYKQPGMEDLKKKGDDARIEQNRPDDGVY.

The protein resides in the mitochondrion. In Saccharomyces cerevisiae (strain ATCC 204508 / S288c) (Baker's yeast), this protein is Protein FMP16, mitochondrial (FMP16).